The sequence spans 379 residues: DnaJ homolog subfamily B member 14 (379 aa).

Residues 1 to 244 (MEGNRDEAEK…GHEREEERGD (244 aa)) lie on the Cytoplasmic side of the membrane. Residues 55-94 (STAGNSPHCRKPSGSGDQSKPNCTKDSTSGSGEGGKGYTK) are disordered. Residues 69 to 84 (SGDQSKPNCTKDSTSG) are compositionally biased toward polar residues. The J domain occupies 108–172 (NYYEVLGVTK…EKRKQYDLTG (65 aa)). A disordered region spans residues 219–241 (SNGRAGYSQQHQHRHSGHEREEE). The helical transmembrane segment at 245–265 (GGFSVFIQLMPIIVLILVSLL) threads the bilayer. At 266-379 (SQLMVSNPPY…ERLTSLYKGG (114 aa)) the chain is on the lumenal side.

The protein belongs to the DnaJ family. DNAJB12/DNAJB14 subfamily. In terms of assembly, interacts (via J domain) with HSPA8/Hsc70. Forms a multiprotein complex, at least composed of DNAJB12, DNAJB14, HSPA8/Hsc70 and SGTA; interaction with DNAJB14 and HSPA8/Hsc70 is direct.

It localises to the endoplasmic reticulum membrane. Its subcellular location is the nucleus membrane. Its function is as follows. Acts as a co-chaperone with HSPA8/Hsc70; required to promote protein folding and trafficking, prevent aggregation of client proteins, and promote unfolded proteins to endoplasmic reticulum-associated degradation (ERAD) pathway. Acts by determining HSPA8/Hsc70's ATPase and polypeptide-binding activities. Can also act independently of HSPA8/Hsc70: together with DNAJB12, acts as a chaperone that promotes maturation of potassium channels KCND2 and KCNH2 by stabilizing nascent channel subunits and assembling them into tetramers. While stabilization of nascent channel proteins is dependent on HSPA8/Hsc70, the process of oligomerization of channel subunits is independent of HSPA8/Hsc70. When overexpressed, forms membranous structures together with DNAJB12 and HSPA8/Hsc70 within the nucleus; the role of these structures, named DJANGOs, is still unclear. (Microbial infection) In case of infection by polyomavirus, involved in the virus endoplasmic reticulum membrane penetration and infection. The sequence is that of DnaJ homolog subfamily B member 14 from Homo sapiens (Human).